Consider the following 153-residue polypeptide: Cofilin (153 aa).

The region spanning 15-147 (GVAVNDSALQ…AYESVLERVS (133 aa)) is the ADF-H domain.

The protein belongs to the actin-binding proteins ADF family.

The protein resides in the cytoplasm. Its subcellular location is the cytoskeleton. It is found in the nucleus matrix. Its function is as follows. Controls reversibly actin polymerization and depolymerization in a pH-sensitive manner. It has the ability to bind G- and F-actin in a 1:1 ratio of cofilin to actin. Binding to F-actin is regulated by tropomyosin. It is the major component of intranuclear and cytoplasmic actin rods. Required for accumulation of actin at the cell division site via depolymerizing actin at the cell ends. In association with myosin II has a role in the assembly of the contractile ring via severing actin filaments. Involved in the maintenance of the contractile ring once formed. In association with profilin and capping protein, has a role in the mitotic reorganization of the actin cytoskeleton. In Yarrowia lipolytica (strain CLIB 122 / E 150) (Yeast), this protein is Cofilin (COF1).